Here is a 402-residue protein sequence, read N- to C-terminus: Protein DesVIII (402 aa).

This sequence belongs to the cytochrome P450 family. In terms of assembly, forms a complex with DesVII.

It functions in the pathway antibiotic biosynthesis. Its function is as follows. Involved in the biosynthesis of the macrolide antibiotics methymycin, neomethymycin, narbomycin, and pikromycin. DesVIII assists the folding of the DesVII polypeptide. However, unlike chaperones, it remains bound to DesVII during catalysis, forming a tight DesVII/DesVIII complex. Although the formation of the DesVII/DesVIII complex is essential for the catalytic activity, DesVIII is unlikely to be involved in catalysis directly. The sequence is that of Protein DesVIII from Streptomyces venezuelae.